The following is a 506-amino-acid chain: Galactose/methyl galactoside import ATP-binding protein MglA (506 aa).

ABC transporter domains lie at 14 to 249 (LEMS…VGRS) and 264 to 506 (VILE…SLHL). 46–53 (GENGAGKS) provides a ligand contact to ATP.

The protein belongs to the ABC transporter superfamily. Galactose/methyl galactoside importer (TC 3.A.1.2.3) family. In terms of assembly, the complex is composed of one ATP-binding protein (MglA), two transmembrane proteins (MglC) and a solute-binding protein (MglB).

It localises to the cell inner membrane. The enzyme catalyses D-galactose(out) + ATP + H2O = D-galactose(in) + ADP + phosphate + H(+). The catalysed reaction is methyl beta-D-galactoside(out) + ATP + H2O = methyl beta-D-galactoside(in) + ADP + phosphate + H(+). Part of the ABC transporter complex MglABC involved in galactose/methyl galactoside import. Responsible for energy coupling to the transport system. The polypeptide is Galactose/methyl galactoside import ATP-binding protein MglA (Shigella boydii serotype 4 (strain Sb227)).